The sequence spans 252 residues: Phosphate import ATP-binding protein PstB (252 aa).

The region spanning 5–247 (VKIDKLNVHF…PEKKQTEDYI (243 aa)) is the ABC transporter domain. 37-44 (GPSGCGKS) is a binding site for ATP.

It belongs to the ABC transporter superfamily. Phosphate importer (TC 3.A.1.7) family. The complex is composed of two ATP-binding proteins (PstB), two transmembrane proteins (PstC and PstA) and a solute-binding protein (PstS).

The protein localises to the cell inner membrane. It carries out the reaction phosphate(out) + ATP + H2O = ADP + 2 phosphate(in) + H(+). In terms of biological role, part of the ABC transporter complex PstSACB involved in phosphate import. Responsible for energy coupling to the transport system. In Geobacter metallireducens (strain ATCC 53774 / DSM 7210 / GS-15), this protein is Phosphate import ATP-binding protein PstB.